Consider the following 156-residue polypeptide: Snaclec A11 (156 aa).

The signal sequence occupies residues 1-23 (MGRSISVSFGLLVVFLSLSGTGA). Cystine bridges form between cysteine 27–cysteine 38, cysteine 55–cysteine 154, and cysteine 129–cysteine 146. The region spanning 34 to 155 (YDQHCYQAVD…CGQPYRFTCE (122 aa)) is the C-type lectin domain.

Belongs to the snaclec family. As to quaternary structure, heterodimer; disulfide-linked. Expressed by the venom gland.

Its subcellular location is the secreted. Functionally, interferes with one step of hemostasis (modulation of platelet aggregation, or coagulation cascade, for example). In Macrovipera lebetinus (Levantine viper), this protein is Snaclec A11.